Reading from the N-terminus, the 506-residue chain is DNA polymerase type-X family protein pol4 (506 aa).

Residues 1–98 (MKILASSTNY…TPGNPYVIWH (98 aa)) enclose the BRCT domain. The disordered stretch occupies residues 106-150 (GSPYTPSTRPASHTEAPNDFENHETPNTENNNEVKSIDNVDQEGS). The involved in ssDNA binding stretch occupies residues 348 to 357 (RGKPVGADVD). The Mg(2+) site is built by Asp-355, Asp-357, and Asp-419.

The protein belongs to the DNA polymerase type-X family. Mg(2+) is required as a cofactor.

It is found in the cytoplasm. The protein resides in the nucleus. It catalyses the reaction DNA(n) + a 2'-deoxyribonucleoside 5'-triphosphate = DNA(n+1) + diphosphate. In terms of biological role, repair polymerase. Involved in gap-filling in DNA non-homologous end joining (NHEJ) required for double-strand break repair. Can incorporate a ribonucleotide (rNTP) into a primer DNA. The chain is DNA polymerase type-X family protein pol4 (pol4) from Schizosaccharomyces pombe (strain 972 / ATCC 24843) (Fission yeast).